The sequence spans 239 residues: Ribosomal RNA small subunit methyltransferase G (239 aa).

S-adenosyl-L-methionine is bound by residues Gly-77, Phe-82, 128–129, and Arg-147; that span reads AE.

The protein belongs to the methyltransferase superfamily. RNA methyltransferase RsmG family.

It localises to the cytoplasm. Specifically methylates the N7 position of guanine in position 535 of 16S rRNA. The polypeptide is Ribosomal RNA small subunit methyltransferase G (Bacillus anthracis (strain A0248)).